Reading from the N-terminus, the 151-residue chain is Transcriptional regulator MraZ (151 aa).

2 consecutive SpoVT-AbrB domains span residues 5–52 (ANAI…PLDE) and 81–124 (AVDL…DEDA).

The protein belongs to the MraZ family. Forms oligomers.

The protein resides in the cytoplasm. It localises to the nucleoid. This Pseudomonas fluorescens (strain ATCC BAA-477 / NRRL B-23932 / Pf-5) protein is Transcriptional regulator MraZ.